We begin with the raw amino-acid sequence, 231 residues long: Chromosome partition protein MukE (231 aa).

The segment at 197–231 (RDGEAMPIEGGLSLDDSENDETSDNSAEGTGDEQP) is disordered.

The protein belongs to the MukE family. In terms of assembly, interacts, and probably forms a ternary complex, with MukF and MukB. The complex formation is stimulated by calcium or magnesium.

The protein localises to the cytoplasm. Its subcellular location is the nucleoid. In terms of biological role, involved in chromosome condensation, segregation and cell cycle progression. May participate in facilitating chromosome segregation by condensation DNA from both sides of a centrally located replisome during cell division. Probably acts via its interaction with MukB and MukF. This Photorhabdus laumondii subsp. laumondii (strain DSM 15139 / CIP 105565 / TT01) (Photorhabdus luminescens subsp. laumondii) protein is Chromosome partition protein MukE.